The chain runs to 323 residues: Melanocortin receptor 3 (323 aa).

The Extracellular portion of the chain corresponds to 1–37 (MNASCCLPSVQPTLPNGSEHLQAPFFSNQSSSAFCEQ). Asn-2, Asn-16, and Asn-28 each carry an N-linked (GlcNAc...) asparagine glycan. A helical membrane pass occupies residues 38 to 63 (VFIKPEVFLSLGIVSLLENILVILAV). The Cytoplasmic portion of the chain corresponds to 64-75 (VRNGNLHSPMYF). The chain crosses the membrane as a helical span at residues 76 to 100 (FLCSLAVADMLVSVSNALETIMIAI). The Extracellular segment spans residues 101–118 (VHSDYLTFEDQFIQHMDN). A helical transmembrane segment spans residues 119 to 140 (IFDSMICISLVASICNLLAIAV). Over 141–160 (DRYVTIFYALRYHSIMTVRK) the chain is Cytoplasmic. A helical transmembrane segment spans residues 161 to 181 (ALTLIVAIWVCCGVCGVVFIV). Residues 182–186 (YSESK) lie on the Extracellular side of the membrane. The helical transmembrane segment at 187–210 (MVIVCLITMFFAMMLLMGTLYVHM) threads the bilayer. Topologically, residues 211 to 245 (FLFARLHVKRIAALPPADGVAPQQHSCMKGAVTIT) are cytoplasmic. A helical membrane pass occupies residues 246-268 (ILLGVFIFCWAPFFLHLVLIITC). Over 269–277 (PTNPYCICY) the chain is Extracellular. Residues 278-301 (TAHFNTYLVLIMCNSVIDPLIYAF) traverse the membrane as a helical segment. Over 302–323 (RSLELRNTFREILCGCNGMNLG) the chain is Cytoplasmic. Cys-315 carries the S-palmitoyl cysteine lipid modification.

This sequence belongs to the G-protein coupled receptor 1 family. As to expression, brain, placental, and gut tissues.

It is found in the cell membrane. Receptor for MSH (alpha, beta and gamma) and ACTH. This receptor is mediated by G proteins which activate adenylate cyclase. Required for expression of anticipatory patterns of activity and wakefulness during periods of limited nutrient availability and for the normal regulation of circadian clock activity in the brain. This Homo sapiens (Human) protein is Melanocortin receptor 3 (MC3R).